The following is a 214-amino-acid chain: Cytochrome c biogenesis ATP-binding export protein CcmA (214 aa).

One can recognise an ABC transporter domain in the interval 12-214; sequence LAAHDLAFSR…TRMLTLEVAA (203 aa). Position 44-51 (44-51) interacts with ATP; sequence GDNGAGKT.

The protein belongs to the ABC transporter superfamily. CcmA exporter (TC 3.A.1.107) family. In terms of assembly, the complex is composed of two ATP-binding proteins (CcmA) and two transmembrane proteins (CcmB).

It localises to the cell inner membrane. It catalyses the reaction heme b(in) + ATP + H2O = heme b(out) + ADP + phosphate + H(+). Part of the ABC transporter complex CcmAB involved in the biogenesis of c-type cytochromes; once thought to export heme, this seems not to be the case, but its exact role is uncertain. Responsible for energy coupling to the transport system. In Xanthomonas axonopodis pv. citri (strain 306), this protein is Cytochrome c biogenesis ATP-binding export protein CcmA.